Consider the following 342-residue polypeptide: S-adenosylmethionine:tRNA ribosyltransferase-isomerase (342 aa).

It belongs to the QueA family. In terms of assembly, monomer.

The protein localises to the cytoplasm. The enzyme catalyses 7-aminomethyl-7-carbaguanosine(34) in tRNA + S-adenosyl-L-methionine = epoxyqueuosine(34) in tRNA + adenine + L-methionine + 2 H(+). Its pathway is tRNA modification; tRNA-queuosine biosynthesis. Transfers and isomerizes the ribose moiety from AdoMet to the 7-aminomethyl group of 7-deazaguanine (preQ1-tRNA) to give epoxyqueuosine (oQ-tRNA). This is S-adenosylmethionine:tRNA ribosyltransferase-isomerase from Listeria monocytogenes serotype 4b (strain CLIP80459).